The chain runs to 464 residues: Gamma-aminobutyric acid receptor subunit alpha-5 (464 aa).

The signal sequence occupies residues 1–25 (MDNGMLSRFIMTKTLLVFCISMTLS). The Extracellular segment spans residues 26-260 (SHFGFSQMPT…FHLKRKIGYF (235 aa)). Residue Asn-45 is glycosylated (N-linked (GlcNAc...) asparagine). Position 101 (Arg-101) interacts with 4-aminobutanoate. An N-linked (GlcNAc...) asparagine glycan is attached at Asn-145. Thr-164 serves as a coordination point for 4-aminobutanoate. Cys-173 and Cys-187 form a disulfide bridge. Asn-207 and Asn-236 each carry an N-linked (GlcNAc...) asparagine glycan. 3 helical membrane-spanning segments follow: residues 261–281 (VIQT…SFWL), 287–308 (PART…ISAR), and 319–340 (AMDW…EFAT). Residues 341-429 (VNYFTKRGWA…TYNSISKIDK (89 aa)) lie on the Cytoplasmic side of the membrane. Lys-355 participates in a covalent cross-link: Glycyl lysine isopeptide (Lys-Gly) (interchain with G-Cter in ubiquitin). The segment at 382-414 (KLTHPPNIPKEQLPGGTGNAVGTASIRASEEKT) is disordered. A helical transmembrane segment spans residues 430-450 (MSRIVFPILFGTFNLVYWATY).

Belongs to the ligand-gated ion channel (TC 1.A.9) family. Gamma-aminobutyric acid receptor (TC 1.A.9.5) subfamily. GABRA5 sub-subfamily. Heteropentamer, formed by a combination of alpha (GABRA1-6), beta (GABRB1-3), gamma (GABRG1-3), delta (GABRD), epsilon (GABRE), rho (GABRR1-3), pi (GABRP) and theta (GABRQ) chains, each subunit exhibiting distinct physiological and pharmacological properties. Expressed in brain areas such as cerebral cortex, hippocampal formation and olfactory bulb granular layer.

Its subcellular location is the postsynaptic cell membrane. It is found in the cell membrane. The catalysed reaction is chloride(in) = chloride(out). With respect to regulation, allosterically potentiated by alphaxalone. Allosterically inhibited by pregnenolone sulfate. Inhibited by zinc and lanthanum. Functionally, alpha subunit of the heteropentameric ligand-gated chloride channel gated by gamma-aminobutyric acid (GABA), a major inhibitory neurotransmitter in the brain. GABA-gated chloride channels, also named GABA(A) receptors (GABAAR), consist of five subunits arranged around a central pore and contain GABA active binding site(s) located at the alpha and beta subunit interface(s). When activated by GABA, GABAARs selectively allow the flow of chloride anions across the cell membrane down their electrochemical gradient. GABAARs containing alpha-5/GABRA5 subunits are mainly extrasynaptic and contribute to the tonic GABAergic inhibition in the hippocampus. Extrasynaptic alpha-5-containing GABAARs in CA1 pyramidal neurons play a role in learning and memory processes. In Rattus norvegicus (Rat), this protein is Gamma-aminobutyric acid receptor subunit alpha-5.